The sequence spans 1207 residues: DNA-directed RNA polymerase subunit beta' (1207 aa).

Cysteine 60, cysteine 62, cysteine 75, and cysteine 78 together coordinate Zn(2+). Positions 450, 452, and 454 each coordinate Mg(2+). Zn(2+) contacts are provided by cysteine 818, cysteine 892, cysteine 899, and cysteine 902.

It belongs to the RNA polymerase beta' chain family. In terms of assembly, the RNAP catalytic core consists of 2 alpha, 1 beta, 1 beta' and 1 omega subunit. When a sigma factor is associated with the core the holoenzyme is formed, which can initiate transcription. Mg(2+) serves as cofactor. It depends on Zn(2+) as a cofactor.

The catalysed reaction is RNA(n) + a ribonucleoside 5'-triphosphate = RNA(n+1) + diphosphate. Its function is as follows. DNA-dependent RNA polymerase catalyzes the transcription of DNA into RNA using the four ribonucleoside triphosphates as substrates. The polypeptide is DNA-directed RNA polymerase subunit beta' (Lactococcus lactis subsp. cremoris (strain SK11)).